Reading from the N-terminus, the 456-residue chain is tRNA(Ile)-lysidine synthase (456 aa).

27–32 is an ATP binding site; sequence SGGVDS.

The protein belongs to the tRNA(Ile)-lysidine synthase family.

The protein resides in the cytoplasm. The catalysed reaction is cytidine(34) in tRNA(Ile2) + L-lysine + ATP = lysidine(34) in tRNA(Ile2) + AMP + diphosphate + H(+). Its function is as follows. Ligates lysine onto the cytidine present at position 34 of the AUA codon-specific tRNA(Ile) that contains the anticodon CAU, in an ATP-dependent manner. Cytidine is converted to lysidine, thus changing the amino acid specificity of the tRNA from methionine to isoleucine. This chain is tRNA(Ile)-lysidine synthase, found in Vibrio atlanticus (strain LGP32) (Vibrio splendidus (strain Mel32)).